A 344-amino-acid polypeptide reads, in one-letter code: Methionine import ATP-binding protein MetN (344 aa).

The ABC transporter domain maps to 2–241; the sequence is IELQGLSQRF…PQHDVTRAMI (240 aa). Residue 38 to 45 coordinates ATP; sequence GRSGAGKS.

This sequence belongs to the ABC transporter superfamily. Methionine importer (TC 3.A.1.24) family. In terms of assembly, the complex is composed of two ATP-binding proteins (MetN), two transmembrane proteins (MetI) and a solute-binding protein (MetQ).

It localises to the cell inner membrane. The catalysed reaction is L-methionine(out) + ATP + H2O = L-methionine(in) + ADP + phosphate + H(+). It carries out the reaction D-methionine(out) + ATP + H2O = D-methionine(in) + ADP + phosphate + H(+). Its function is as follows. Part of the ABC transporter complex MetNIQ involved in methionine import. Responsible for energy coupling to the transport system. This is Methionine import ATP-binding protein MetN from Cupriavidus necator (strain ATCC 17699 / DSM 428 / KCTC 22496 / NCIMB 10442 / H16 / Stanier 337) (Ralstonia eutropha).